The primary structure comprises 269 residues: Eukaryotic translation initiation factor 3 subunit G-1 (269 aa).

The RRM domain maps to 188 to 266 (AAIRISNLSE…LILSVEWSKP (79 aa)).

This sequence belongs to the eIF-3 subunit G family. Component of the eukaryotic translation initiation factor 3 (eIF-3) complex. The eIF-3 complex interacts with pix.

The protein resides in the cytoplasm. In terms of biological role, RNA-binding component of the eukaryotic translation initiation factor 3 (eIF-3) complex, which is involved in protein synthesis of a specialized repertoire of mRNAs and, together with other initiation factors, stimulates binding of mRNA and methionyl-tRNAi to the 40S ribosome. The eIF-3 complex specifically targets and initiates translation of a subset of mRNAs involved in cell proliferation. This subunit can bind 18S rRNA. The sequence is that of Eukaryotic translation initiation factor 3 subunit G-1 from Drosophila persimilis (Fruit fly).